The primary structure comprises 250 residues: Troponin I 1 (250 aa).

Disordered stretches follow at residues 1–59 (MSQI…ERKK) and 194–250 (SVFT…ADEE). Basic and acidic residues-rich tracts occupy residues 21 to 45 (DAQRKAQEREAKKAEVRKRLEEAGQ) and 206 to 221 (DKPEWSKKKEEKKEES). Positions 229 to 250 (PVEEEETAASEGEEEEEEADEE) are enriched in acidic residues.

The protein belongs to the troponin I family. Strongly expressed in body wall muscle during embryogenesis, reduces during the larval stages to adult. In late-stage larvae and adults, expression is evident in the proximal gonad of both hermaphrodites and males.

Its function is as follows. Troponin I is the inhibitory subunit of troponin, the thin filament regulatory complex which confers calcium-sensitivity to muscle actomyosin ATPase activity. This chain is Troponin I 1 (tni-1), found in Caenorhabditis elegans.